The chain runs to 28 residues: N-acetyl-D-galactosamine-binding lectin subunit A (28 aa).

The protein belongs to the ribosome-inactivating protein family. Disulfide-linked heterodimer of A and B chains.

It carries out the reaction Endohydrolysis of the N-glycosidic bond at one specific adenosine on the 28S rRNA.. In terms of biological role, gal / GalNAc-specific lectin. Agglutinates both native and trypsin-treated rabbit erythrocytes but not human erythrocytes irrespective of blood group type. The sequence is that of N-acetyl-D-galactosamine-binding lectin subunit A from Iris hollandica (Dutch iris).